Reading from the N-terminus, the 421-residue chain is Histidine--tRNA ligase (421 aa).

This sequence belongs to the class-II aminoacyl-tRNA synthetase family.

It localises to the cytoplasm. The catalysed reaction is tRNA(His) + L-histidine + ATP = L-histidyl-tRNA(His) + AMP + diphosphate + H(+). The polypeptide is Histidine--tRNA ligase (Pyrobaculum calidifontis (strain DSM 21063 / JCM 11548 / VA1)).